Here is a 78-residue protein sequence, read N- to C-terminus: Ubiquitin-like protein 1 (78 aa).

It belongs to the ubiquitin family.

This chain is Ubiquitin-like protein 1 (ubl1), found in Schizosaccharomyces pombe (strain 972 / ATCC 24843) (Fission yeast).